We begin with the raw amino-acid sequence, 324 residues long: Putative GTPase PYRAB02490 (324 aa).

Residues 52–60 (GPPGAGKST), Asp-194, and 229–231 (VAT) contribute to the GTP site.

It belongs to the SIMIBI class G3E GTPase family. ArgK/MeaB subfamily.

May have GTPase activity. May also bind and hydrolyze ATP. May function as chaperone. This is Putative GTPase PYRAB02490 from Pyrococcus abyssi (strain GE5 / Orsay).